An 85-amino-acid chain; its full sequence is MEIIIAFFLYLNDKRKKRFLFKKSKIPLMIITNNDIVMCPIWYNYQVNTVFLPCAHVACYLCSKIIKNCHLCRRKILKTQFFKLP.

The segment at 39-73 adopts an RING-type; degenerate zinc-finger fold; that stretch reads CPIWYNYQVNTVFLPCAHVACYLCSKIIKNCHLCR.

The protein is Putative RING finger protein 095L of Invertebrate iridescent virus 6 (IIV-6).